The primary structure comprises 867 residues: Leucine--tRNA ligase (867 aa).

The short motif at 42–52 (PYPSGKLHMGH) is the 'HIGH' region element. The short motif at 631-635 (KMSKS) is the 'KMSKS' region element. Residue lysine 634 coordinates ATP.

This sequence belongs to the class-I aminoacyl-tRNA synthetase family.

It is found in the cytoplasm. It catalyses the reaction tRNA(Leu) + L-leucine + ATP = L-leucyl-tRNA(Leu) + AMP + diphosphate. The polypeptide is Leucine--tRNA ligase (Dichelobacter nodosus (strain VCS1703A)).